The sequence spans 192 residues: Molybdenum cofactor guanylyltransferase (192 aa).

GTP contacts are provided by residues 10-12 (LAG), Lys23, Asn51, Asp69, and Asp99. Mg(2+) is bound at residue Asp99.

Belongs to the MobA family. Monomer. The cofactor is Mg(2+).

It localises to the cytoplasm. The catalysed reaction is Mo-molybdopterin + GTP + H(+) = Mo-molybdopterin guanine dinucleotide + diphosphate. In terms of biological role, transfers a GMP moiety from GTP to Mo-molybdopterin (Mo-MPT) cofactor (Moco or molybdenum cofactor) to form Mo-molybdopterin guanine dinucleotide (Mo-MGD) cofactor. In Haemophilus influenzae (strain 86-028NP), this protein is Molybdenum cofactor guanylyltransferase.